We begin with the raw amino-acid sequence, 346 residues long: tRNA N6-adenosine threonylcarbamoyltransferase (346 aa).

Fe cation-binding residues include His-111 and His-115. Substrate is bound by residues 134 to 138 (LVSGG), Asp-167, Gly-180, and Asn-279. Asp-307 contributes to the Fe cation binding site.

This sequence belongs to the KAE1 / TsaD family. It depends on Fe(2+) as a cofactor.

It localises to the cytoplasm. The catalysed reaction is L-threonylcarbamoyladenylate + adenosine(37) in tRNA = N(6)-L-threonylcarbamoyladenosine(37) in tRNA + AMP + H(+). Functionally, required for the formation of a threonylcarbamoyl group on adenosine at position 37 (t(6)A37) in tRNAs that read codons beginning with adenine. Is involved in the transfer of the threonylcarbamoyl moiety of threonylcarbamoyl-AMP (TC-AMP) to the N6 group of A37, together with TsaE and TsaB. TsaD likely plays a direct catalytic role in this reaction. In Burkholderia mallei (strain ATCC 23344), this protein is tRNA N6-adenosine threonylcarbamoyltransferase.